Here is a 248-residue protein sequence, read N- to C-terminus: Peptidyl-prolyl cis-trans isomerase, chloroplastic (248 aa).

Positions 85-243 constitute a PPIase cyclophilin-type domain; sequence FFDIEIGGES…KPCKIAKSGE (159 aa). The disordered stretch occupies residues 223 to 248; the sequence is QETSKLDNSPKKPCKIAKSGELPLDG.

Belongs to the cyclophilin-type PPIase family. Highly expressed in leaf.

Its subcellular location is the plastid. It localises to the chloroplast stroma. It carries out the reaction [protein]-peptidylproline (omega=180) = [protein]-peptidylproline (omega=0). With respect to regulation, binds cyclosporin A (CsA). CsA mediates some of its effects via an inhibitory action on PPIase. Its function is as follows. PPIases accelerate the folding of proteins. It catalyzes the cis-trans isomerization of proline imidic peptide bonds in oligopeptides. This Vicia faba (Broad bean) protein is Peptidyl-prolyl cis-trans isomerase, chloroplastic.